The primary structure comprises 79 residues: Acyl carrier protein (79 aa).

Residues 2–77 (SEIGERVKKI…DATKFLEKNA (76 aa)) form the Carrier domain. Ser-37 is subject to O-(pantetheine 4'-phosphoryl)serine.

Belongs to the acyl carrier protein (ACP) family. Post-translationally, 4'-phosphopantetheine is transferred from CoA to a specific serine of apo-ACP by AcpS. This modification is essential for activity because fatty acids are bound in thioester linkage to the sulfhydryl of the prosthetic group.

Its subcellular location is the cytoplasm. It functions in the pathway lipid metabolism; fatty acid biosynthesis. In terms of biological role, carrier of the growing fatty acid chain in fatty acid biosynthesis. This chain is Acyl carrier protein, found in Nitrobacter hamburgensis (strain DSM 10229 / NCIMB 13809 / X14).